Here is a 321-residue protein sequence, read N- to C-terminus: GTP cyclohydrolase FolE2 (321 aa).

This sequence belongs to the GTP cyclohydrolase IV family.

The enzyme catalyses GTP + H2O = 7,8-dihydroneopterin 3'-triphosphate + formate + H(+). Its pathway is cofactor biosynthesis; 7,8-dihydroneopterin triphosphate biosynthesis; 7,8-dihydroneopterin triphosphate from GTP: step 1/1. Converts GTP to 7,8-dihydroneopterin triphosphate. The sequence is that of GTP cyclohydrolase FolE2 from Paracoccus denitrificans (strain Pd 1222).